The sequence spans 446 residues: Packaging protein 1 (446 aa).

Residues 1–71 (MEEKAGLGRL…QPQASKPKKH (71 aa)) form a disordered region. The span at 31–43 (FHSDRNHPNKEAE) shows a compositional bias: basic and acidic residues. ATP is bound at residue 170 to 177 (GPTGCGKS). The interval 439–446 (RYYHSKKK) is DNA-binding.

The protein belongs to the adenoviridae packaging protein 1 family. Homodimer. Part of a genome packaging complex composed of packaging proteins 1, 2 and 3; this complex specifically binds to the packaging sequence on the left end of viral genomic DNA and performs packaging of the viral genome. Interacts with protein 33K.

It is found in the virion. The protein localises to the host nucleus. Its subcellular location is the host nucleoplasm. It localises to the host nucleolus. Component of the packaging machinery which encapsidates the viral DNA into preformed capsids and transcriptional activator of the viral major late promoter (MLP). Binds, along with packaging proteins 2 and 3, to the specific packaging sequence on the left end of viral genomic DNA and displays ATPase activity thereby providing the power stroke of the packaging machinery. The activity of packaging protein IVa2 is stimulated by protein 33K which acts as a terminase. May be the protein that pumps DNA into the capsid powered by ATP hydrolysis. Specifically binds to the 5'-CG-3' nucleotides of the repeats making up the packaging sequence. Component of the DEF-A and DEF-B transcription factors that bind downstream elements of the major late promoter (MLP), and stimulate transcription from the MLP after initiation of viral DNA replication. DEF-A is a heterodimer packaging proteins 1 and 2 and DEF-B is a homodimer of packaging protein 1. The sequence is that of Packaging protein 1 from Canine adenovirus serotype 2 (strain Toronto A 26-61) (CAdV-2).